A 254-amino-acid polypeptide reads, in one-letter code: MTLAKRIIPCLDVTAGRVVKGVNFLELRDAGDPVEIARRYDDQGADELTFLDITATSDGRDLILDIIEAVASQVFIPLTVGGGVRAVDDVRRLLNAGADKVGINSSAISNPQLVFDASQKYGSQCIVVAIDAKKAADGRWEVFTHGGRKATGLDAIEWAKKMESLGAGEILLTSMDRDGTKVGFDLDLTRSVSDAISIPVIASGGVGGLQDLVDGVKIGRADAVLAASIFHYGQHTVQEAKRFMSEQGIAMRLT.

Catalysis depends on residues D12 and D131.

Belongs to the HisA/HisF family. Heterodimer of HisH and HisF.

It is found in the cytoplasm. It carries out the reaction 5-[(5-phospho-1-deoxy-D-ribulos-1-ylimino)methylamino]-1-(5-phospho-beta-D-ribosyl)imidazole-4-carboxamide + L-glutamine = D-erythro-1-(imidazol-4-yl)glycerol 3-phosphate + 5-amino-1-(5-phospho-beta-D-ribosyl)imidazole-4-carboxamide + L-glutamate + H(+). It functions in the pathway amino-acid biosynthesis; L-histidine biosynthesis; L-histidine from 5-phospho-alpha-D-ribose 1-diphosphate: step 5/9. IGPS catalyzes the conversion of PRFAR and glutamine to IGP, AICAR and glutamate. The HisF subunit catalyzes the cyclization activity that produces IGP and AICAR from PRFAR using the ammonia provided by the HisH subunit. The polypeptide is Imidazole glycerol phosphate synthase subunit HisF (Herminiimonas arsenicoxydans).